We begin with the raw amino-acid sequence, 395 residues long: GTPase Obg (395 aa).

Positions 1-159 (MQFVDEASII…RNLRFEMKVM (159 aa)) constitute an Obg domain. Residues 128–147 (IHFKSSTNRAPRKTTPGTEG) are disordered. The OBG-type G domain occupies 160–333 (ADVGLLGVPN…LVQAAHRWLT (174 aa)). GTP is bound by residues 166 to 173 (GVPNAGKS), 191 to 195 (FTTLV), 213 to 216 (DVPG), 283 to 286 (NKLD), and 314 to 316 (SAI). Positions 173 and 193 each coordinate Mg(2+). Over residues 340 to 368 (AEDETAFEHEREMRRRMEDEAVARAEARM) the composition is skewed to basic and acidic residues. Residues 340-395 (AEDETAFEHEREMRRRMEDEAVARAEARMSRKRKPAEDDDDDFDEDDYDVEVEYAP) are disordered. Acidic residues predominate over residues 376–395 (EDDDDDFDEDDYDVEVEYAP).

This sequence belongs to the TRAFAC class OBG-HflX-like GTPase superfamily. OBG GTPase family. As to quaternary structure, monomer. Requires Mg(2+) as cofactor.

It is found in the cytoplasm. An essential GTPase which binds GTP, GDP and possibly (p)ppGpp with moderate affinity, with high nucleotide exchange rates and a fairly low GTP hydrolysis rate. Plays a role in control of the cell cycle, stress response, ribosome biogenesis and in those bacteria that undergo differentiation, in morphogenesis control. The polypeptide is GTPase Obg (Chromohalobacter salexigens (strain ATCC BAA-138 / DSM 3043 / CIP 106854 / NCIMB 13768 / 1H11)).